A 63-amino-acid polypeptide reads, in one-letter code: uncharacterized protein (63 aa).

This is an uncharacterized protein from Dictyostelium discoideum (Social amoeba).